The chain runs to 131 residues: MVLPASMRLRGHRCFDHLHRRGKRYYGTWMVLRKAPSNAKLLRRDIHGLLTQTQPHSCRIAVVISGKVHKRAVVRNRLRRLLHDHLRLRFEARSTHSDVWLLISLRPGADADEANLLEECDRLLEEAGLQP.

Belongs to the RnpA family. Consists of a catalytic RNA component (M1 or rnpB) and a protein subunit.

It catalyses the reaction Endonucleolytic cleavage of RNA, removing 5'-extranucleotides from tRNA precursor.. RNaseP catalyzes the removal of the 5'-leader sequence from pre-tRNA to produce the mature 5'-terminus. It can also cleave other RNA substrates such as 4.5S RNA. The protein component plays an auxiliary but essential role in vivo by binding to the 5'-leader sequence and broadening the substrate specificity of the ribozyme. The polypeptide is Ribonuclease P protein component (Synechococcus sp. (strain WH7803)).